An 82-amino-acid chain; its full sequence is UPF0180 protein BALH_1248 (82 aa).

The protein belongs to the UPF0180 family.

In Bacillus thuringiensis (strain Al Hakam), this protein is UPF0180 protein BALH_1248.